A 209-amino-acid chain; its full sequence is NAD(P)H-quinone oxidoreductase subunit N, chloroplastic (209 aa).

A chloroplast-targeting transit peptide spans 1–45 (MGSRAICIQRVAPPCFEASQVKKIKTVGSFLVNTRSKRRRSTGVK).

Belongs to the NDH complex subunit N family. As to quaternary structure, part of the chloroplast NDH complex, composed of a mixture of chloroplast and nucleus encoded subunits. Component of the NDH subcomplex A, at least composed of ndhH, ndhI, ndhJ, ndhK, ndhL, ndhM, ndhN and ndhO.

The protein resides in the plastid. It localises to the chloroplast thylakoid membrane. The enzyme catalyses a plastoquinone + NADH + (n+1) H(+)(in) = a plastoquinol + NAD(+) + n H(+)(out). It carries out the reaction a plastoquinone + NADPH + (n+1) H(+)(in) = a plastoquinol + NADP(+) + n H(+)(out). In terms of biological role, NDH shuttles electrons from NAD(P)H:plastoquinone, via FMN and iron-sulfur (Fe-S) centers, to quinones in the photosynthetic chain and possibly in a chloroplast respiratory chain. The immediate electron acceptor for the enzyme in this species is believed to be plastoquinone. Couples the redox reaction to proton translocation, and thus conserves the redox energy in a proton gradient. This Arabidopsis thaliana (Mouse-ear cress) protein is NAD(P)H-quinone oxidoreductase subunit N, chloroplastic.